The sequence spans 136 residues: DNA-directed RNA polymerase subunit omega (136 aa).

Residues 90–102 (SSPAAAAVAPQSS) are compositionally biased toward low complexity. Residues 90–136 (SSPAAAAVAPQSSSDDKDVQFDRMSEEDLLRGLENLAPPTETDDEGE) are disordered. The segment covering 103–120 (SDDKDVQFDRMSEEDLLR) has biased composition (basic and acidic residues).

It belongs to the RNA polymerase subunit omega family. The RNAP catalytic core consists of 2 alpha, 1 beta, 1 beta' and 1 omega subunit. When a sigma factor is associated with the core the holoenzyme is formed, which can initiate transcription.

It carries out the reaction RNA(n) + a ribonucleoside 5'-triphosphate = RNA(n+1) + diphosphate. Functionally, promotes RNA polymerase assembly. Latches the N- and C-terminal regions of the beta' subunit thereby facilitating its interaction with the beta and alpha subunits. The polypeptide is DNA-directed RNA polymerase subunit omega (Methylorubrum populi (strain ATCC BAA-705 / NCIMB 13946 / BJ001) (Methylobacterium populi)).